The chain runs to 202 residues: Transmembrane protein 223 (202 aa).

Topologically, residues 1-43 (MAAPGRRWSVLLFRALQSLSARRALHDTAPPRDVLLFEHERGR) are mitochondrial matrix. The helical transmembrane segment at 44 to 64 (FFAVLGLFCAGQGVFWASLAI) threads the bilayer. Residues 65-97 (ASLARPPTPVRPTDAKTPDHGGLDLRSTLWRYG) lie on the Mitochondrial intermembrane side of the membrane. A helical transmembrane segment spans residues 98 to 118 (LAVGCGAIGSLVLGAGLLFSL). Topologically, residues 119 to 202 (RSVRSVMLRA…DNTVGAYRSL (84 aa)) are mitochondrial matrix.

This sequence belongs to the TMEM223 family. As to quaternary structure, associates with the mitochondrial ribosome.

The protein resides in the mitochondrion inner membrane. In terms of biological role, mitochondrial ribosome-associated protein involved in the first steps of cytochrome c oxidase complex (complex IV) biogenesis. Stimulates the translation of MT-CO1 mRNA and is a constituent of early MT-CO1 assembly intermediates. This Bos taurus (Bovine) protein is Transmembrane protein 223.